We begin with the raw amino-acid sequence, 610 residues long: Isocitrate dehydrogenase kinase/phosphatase (610 aa).

Residues 359 to 365 (APGFKGT) and Lys380 each bind ATP. Residue Asp419 is part of the active site.

Belongs to the AceK family.

It localises to the cytoplasm. The catalysed reaction is L-seryl-[isocitrate dehydrogenase] + ATP = O-phospho-L-seryl-[isocitrate dehydrogenase] + ADP + H(+). Bifunctional enzyme which can phosphorylate or dephosphorylate isocitrate dehydrogenase (IDH) on a specific serine residue. This is a regulatory mechanism which enables bacteria to bypass the Krebs cycle via the glyoxylate shunt in response to the source of carbon. When bacteria are grown on glucose, IDH is fully active and unphosphorylated, but when grown on acetate or ethanol, the activity of IDH declines drastically concomitant with its phosphorylation. The polypeptide is Isocitrate dehydrogenase kinase/phosphatase (Rhodopseudomonas palustris (strain ATCC BAA-98 / CGA009)).